The sequence spans 376 residues: Protein STRICTOSIDINE SYNTHASE-LIKE 8 (376 aa).

An N-terminal signal peptide occupies residues 1 to 31 (MPISRRVLTPITAAPVILAVLCFFFWSSIIG). Residues asparagine 98, asparagine 172, and asparagine 224 are each glycosylated (N-linked (GlcNAc...) asparagine).

It belongs to the strictosidine synthase family.

It is found in the vacuole. The sequence is that of Protein STRICTOSIDINE SYNTHASE-LIKE 8 from Arabidopsis thaliana (Mouse-ear cress).